The chain runs to 401 residues: tRNA (guanine-N(7)-)-methyltransferase non-catalytic subunit wuho (401 aa).

The interval 45 to 85 is disordered; that stretch reads KGRPRKYFDADSDSDEEQQNGDEPGTGKNNGGGDTGKKDQD. Acidic residues predominate over residues 54–64; sequence ADSDSDEEQQN. WD repeat units lie at residues 86-125, 174-213, and 217-255; these read DQTN…RTLK, GHMS…NIET, and GHTE…ELAR.

It belongs to the WD repeat TRM82 family. In terms of assembly, forms a heterodimer with the catalytic subunit.

Its subcellular location is the nucleus. Its pathway is tRNA modification; N(7)-methylguanine-tRNA biosynthesis. Its function is as follows. Required for the formation of N(7)-methylguanine at position 46 (m7G46) in tRNA. In the complex, it is required to stabilize and induce conformational changes of the catalytic subunit. The protein is tRNA (guanine-N(7)-)-methyltransferase non-catalytic subunit wuho of Culex quinquefasciatus (Southern house mosquito).